Reading from the N-terminus, the 136-residue chain is SNARE-associated protein Snapin (136 aa).

An N-acetylalanine modification is found at A2. At S10 the chain carries Phosphoserine. Residue T14 is modified to Phosphothreonine. Residues 37-126 (VQQLDSHVHA…TARRRAMLDS (90 aa)) adopt a coiled-coil conformation. S50 is modified (phosphoserine; by PKA). The tract at residues 83–136 (KKLLNARRRVVLVNNILQNAQERLRRLNHSVAKETARRRAMLDSGIYPPGSPGK) is interaction with TOR1A. At S126 the chain carries Phosphoserine. Y129 carries the post-translational modification Phosphotyrosine. S133 is modified (phosphoserine).

It belongs to the SNAPIN family. In terms of assembly, component of the biogenesis of lysosome-related organelles complex 1 (BLOC-1) composed of BLOC1S1, BLOC1S2, BLOC1S3, BLOC1S4, BLOC1S5, BLOC1S6, DTNBP1/BLOC1S7 and SNAPIN/BLOC1S8. Octamer composed of one copy each BLOC1S1, BLOC1S2, BLOC1S3, BLOC1S4, BLOC1S5, BLOC1S6, DTNBP1/BLOC1S7 and SNAPIN/BLOC1S8. The BLOC-1 complex associates with the AP-3 protein complex and membrane protein cargos. Component of the BLOC-one-related complex (BORC) which is composed of BLOC1S1, BLOC1S2, BORCS5, BORCS6, BORCS7, BORCS8, KXD1 and SNAPIN. Associates with the SNARE complex. Interacts with CSNK1D, SNAP23 and STX4A but not with STX1A, VAMP2 and SYT1. Interacts with SNAP25; the interaction with SNAP25 is increased by its phosphorylation. Interacts with CNTRL, NANOS1, PUM2 and RGS7. Interacts with TOR1A; the interaction is direct and associates SNAPIN with the CSN complex. (Microbial infection) Interacts with human cytomegalovirus/HHV-5 protein UL70. In terms of processing, phosphorylated by CSNK1D/CK1. Phosphorylated by PKD, phosphorylation controls SNAPIN protein stability. As to expression, expressed in male germ cells of adult testis (at protein level).

Its subcellular location is the membrane. It localises to the cytoplasm. The protein resides in the cytosol. It is found in the perinuclear region. The protein localises to the golgi apparatus membrane. Its subcellular location is the lysosome membrane. It localises to the cytoplasmic vesicle. The protein resides in the secretory vesicle. It is found in the synaptic vesicle membrane. Its function is as follows. Component of the BLOC-1 complex, a complex that is required for normal biogenesis of lysosome-related organelles (LRO), such as platelet dense granules and melanosomes. In concert with the AP-3 complex, the BLOC-1 complex is required to target membrane protein cargos into vesicles assembled at cell bodies for delivery into neurites and nerve terminals. The BLOC-1 complex, in association with SNARE proteins, is also proposed to be involved in neurite extension. Plays a role in intracellular vesicle trafficking and synaptic vesicle recycling. May modulate a step between vesicle priming, fusion and calcium-dependent neurotransmitter release through its ability to potentiate the interaction of synaptotagmin with the SNAREs and the plasma-membrane-associated protein SNAP25. Its phosphorylation state influences exocytotic protein interactions and may regulate synaptic vesicle exocytosis. May also have a role in the mechanisms of SNARE-mediated membrane fusion in non-neuronal cells. As part of the BORC complex may play a role in lysosomes movement and localization at the cell periphery. Associated with the cytosolic face of lysosomes, the BORC complex may recruit ARL8B and couple lysosomes to microtubule plus-end-directed kinesin motor. The protein is SNARE-associated protein Snapin (SNAPIN) of Homo sapiens (Human).